A 152-amino-acid polypeptide reads, in one-letter code: Troponin C (152 aa).

Position 1 is an N-acetylthreonine (T1). EF-hand domains lie at 9 to 44, 45 to 80, 82 to 117, and 118 to 152; these read KQIL…LGLL, VKDD…KLKE, LDER…LGDE, and LTEE…SSDA. Positions 131, 133, 135, 137, and 142 each coordinate Ca(2+).

The protein belongs to the troponin C family.

Functionally, troponin is the central regulatory protein of striated muscle contraction. Tn consists of three components: Tn-I which is the inhibitor of actomyosin ATPase, Tn-T which contains the binding site for tropomyosin and Tn-C. The binding of calcium to Tn-C abolishes the inhibitory action of Tn on actin filaments. The chain is Troponin C from Mizuhopecten yessoensis (Japanese scallop).